The primary structure comprises 465 residues: Probable protein phosphatase 2C 71 (465 aa).

Disordered regions lie at residues Arg14–Ala47, Arg68–Thr119, and Ser133–Glu191. Pro residues predominate over residues Leu18–Pro30. 2 stretches are compositionally biased toward low complexity: residues Ala84–Glu106 and Ser133–Gly143. Positions Ala222 to Val460 constitute a PPM-type phosphatase domain. Mn(2+) is bound by residues Asp254, Gly255, Asp384, and Asp451.

This sequence belongs to the PP2C family. Mg(2+) is required as a cofactor. It depends on Mn(2+) as a cofactor.

It carries out the reaction O-phospho-L-seryl-[protein] + H2O = L-seryl-[protein] + phosphate. It catalyses the reaction O-phospho-L-threonyl-[protein] + H2O = L-threonyl-[protein] + phosphate. The protein is Probable protein phosphatase 2C 71 of Oryza sativa subsp. japonica (Rice).